The chain runs to 264 residues: Thymidylate synthase (264 aa).

Residue Arg-21 coordinates dUMP. (6R)-5,10-methylene-5,6,7,8-tetrahydrofolate is bound at residue His-51. A dUMP-binding site is contributed by 126 to 127 (RR). Cys-146 (nucleophile) is an active-site residue. Residues 166 to 169 (RSAD), Asn-177, and 207 to 209 (HLY) contribute to the dUMP site. Asp-169 contributes to the (6R)-5,10-methylene-5,6,7,8-tetrahydrofolate binding site. Residue Ala-263 coordinates (6R)-5,10-methylene-5,6,7,8-tetrahydrofolate.

This sequence belongs to the thymidylate synthase family. Bacterial-type ThyA subfamily. In terms of assembly, homodimer.

The protein localises to the cytoplasm. It carries out the reaction dUMP + (6R)-5,10-methylene-5,6,7,8-tetrahydrofolate = 7,8-dihydrofolate + dTMP. It functions in the pathway pyrimidine metabolism; dTTP biosynthesis. In terms of biological role, catalyzes the reductive methylation of 2'-deoxyuridine-5'-monophosphate (dUMP) to 2'-deoxythymidine-5'-monophosphate (dTMP) while utilizing 5,10-methylenetetrahydrofolate (mTHF) as the methyl donor and reductant in the reaction, yielding dihydrofolate (DHF) as a by-product. This enzymatic reaction provides an intracellular de novo source of dTMP, an essential precursor for DNA biosynthesis. In Rhodopirellula baltica (strain DSM 10527 / NCIMB 13988 / SH1), this protein is Thymidylate synthase.